The sequence spans 239 residues: Probable transcriptional regulatory protein BBR47_14810 (239 aa).

This sequence belongs to the TACO1 family. YeeN subfamily.

The protein localises to the cytoplasm. The chain is Probable transcriptional regulatory protein BBR47_14810 from Brevibacillus brevis (strain 47 / JCM 6285 / NBRC 100599).